Reading from the N-terminus, the 219-residue chain is METIVLVPRQDQETFSDSRPVLDGDLMLEFLENKIRHPVRRRQPRVVPVTSSDPEVVDDEDDEDQSDDSDEERQRLYFQYMVLKRMYPTEVIPEMTTYSNVAIMREKYKLLTRRLSLDKHINEWKKYIIVGMCIMELVMTKLNFDASGFARYQIKSLGAYDQLLAEMADKYYEATPQSSVEMRLMTTMGMNMAVFMLGKLLGGQMDFLGLLENAFGSSS.

Residues 42-71 are disordered; that stretch reads RQPRVVPVTSSDPEVVDDEDDEDQSDDSDE. Residues 45–54 are compositionally biased toward low complexity; it reads RVVPVTSSDP. A compositionally biased stretch (acidic residues) spans 55 to 71; it reads EVVDDEDDEDQSDDSDE.

This is an uncharacterized protein from Dryophytes versicolor (chameleon treefrog).